The primary structure comprises 130 residues: Serum amyloid A-4 protein (130 aa).

The first 18 residues, 1-18 (MRLATVIVLCSLFLGVSG), serve as a signal peptide directing secretion. The interval 109-130 (EEWGRSGKNPNHFRPEGLPEKF) is disordered. Over residues 121–130 (FRPEGLPEKF) the composition is skewed to basic and acidic residues.

Belongs to the SAA family. As to quaternary structure, apolipoprotein of the HDL complex. Expressed by the liver; secreted in plasma.

The protein resides in the secreted. Its function is as follows. Major acute phase reactant. This is Serum amyloid A-4 protein from Mus musculus (Mouse).